Consider the following 311-residue polypeptide: Homoserine kinase (311 aa).

88-98 (PEGLGLGSSGA) contributes to the ATP binding site.

It belongs to the GHMP kinase family. Homoserine kinase subfamily.

It localises to the cytoplasm. It carries out the reaction L-homoserine + ATP = O-phospho-L-homoserine + ADP + H(+). It functions in the pathway amino-acid biosynthesis; L-threonine biosynthesis; L-threonine from L-aspartate: step 4/5. Functionally, catalyzes the ATP-dependent phosphorylation of L-homoserine to L-homoserine phosphate. The sequence is that of Homoserine kinase from Saccharolobus solfataricus (strain ATCC 35092 / DSM 1617 / JCM 11322 / P2) (Sulfolobus solfataricus).